The following is a 304-amino-acid chain: Ribonuclease Z (304 aa).

7 residues coordinate Zn(2+): His64, His66, Asp68, His69, His141, Asp209, and His267. Catalysis depends on Asp68, which acts as the Proton acceptor.

The protein belongs to the RNase Z family. Homodimer. The cofactor is Zn(2+).

The enzyme catalyses Endonucleolytic cleavage of RNA, removing extra 3' nucleotides from tRNA precursor, generating 3' termini of tRNAs. A 3'-hydroxy group is left at the tRNA terminus and a 5'-phosphoryl group is left at the trailer molecule.. Its function is as follows. Zinc phosphodiesterase, which displays some tRNA 3'-processing endonuclease activity. Probably involved in tRNA maturation, by removing a 3'-trailer from precursor tRNA. The sequence is that of Ribonuclease Z from Thermoplasma volcanium (strain ATCC 51530 / DSM 4299 / JCM 9571 / NBRC 15438 / GSS1).